The primary structure comprises 620 residues: uncharacterized protein (620 aa).

A run of 4 helical transmembrane segments spans residues 66 to 86, 238 to 258, 546 to 566, and 584 to 604; these read LLNFSDFVSGAGIDTVFNQII, FFDALFVMLLLVCHLNKNLLW, LGIISAVVFGIVEFFNCVWTI, and IIFISIGTILVLFLLVTILVF.

The protein localises to the cell membrane. This is an uncharacterized protein from Mycoplasma genitalium (strain ATCC 33530 / DSM 19775 / NCTC 10195 / G37) (Mycoplasmoides genitalium).